A 101-amino-acid polypeptide reads, in one-letter code: MNGTDILRFLQSSPTISYSKHFILITACPLFVLGLLLLGLRTAMFKQVRGKTTTSRNRGVIAAKLLVAWYLATIVMYIAKSEMWKYAFAVSLLLNSLALFF.

Helical transmembrane passes span 20–40 (KHFI…LLGL), 59–79 (GVIA…MYIA), and 81–101 (SEMW…ALFF).

It localises to the endoplasmic reticulum. It is found in the membrane. This is an uncharacterized protein from Saccharomyces cerevisiae (strain ATCC 204508 / S288c) (Baker's yeast).